Reading from the N-terminus, the 155-residue chain is Protein phosphatase 1 regulatory subunit 17 (155 aa).

Residues 41–73 (KKKPRKGKNVQATLNVESDQKKPRRKDTPALHI) are disordered. A compositionally biased stretch (basic and acidic residues) spans 58–69 (SDQKKPRRKDTP). Phosphothreonine; by PKG/PRKG1 occurs at positions 68 and 119.

Substrate for cGMP-dependent protein kinase. Phosphorylated by PRKG1 isoform alpha. Phosphorylation of Thr-68 and Thr-119 is required for its phosphatase activity. In terms of processing, substrate for cGMP-dependent protein kinase. As to expression, highly expressed in cerebellum.

In terms of biological role, inhibits phosphatase activities of protein phosphatase 1 (PP1) and protein phosphatase 2A (PP2A) complexes. This is Protein phosphatase 1 regulatory subunit 17 (PPP1R17) from Homo sapiens (Human).